We begin with the raw amino-acid sequence, 456 residues long: UDP-N-acetylglucosamine 1-carboxyvinyltransferase (456 aa).

34–35 lines the phosphoenolpyruvate pocket; that stretch reads KN. UDP-N-acetyl-alpha-D-glucosamine is bound at residue Arg104. Cys128 acts as the Proton donor in catalysis. A 2-(S-cysteinyl)pyruvic acid O-phosphothioketal modification is found at Cys128. The UDP-N-acetyl-alpha-D-glucosamine site is built by Asp319 and Ile341.

Belongs to the EPSP synthase family. MurA subfamily.

It localises to the cytoplasm. It catalyses the reaction phosphoenolpyruvate + UDP-N-acetyl-alpha-D-glucosamine = UDP-N-acetyl-3-O-(1-carboxyvinyl)-alpha-D-glucosamine + phosphate. It participates in cell wall biogenesis; peptidoglycan biosynthesis. Its function is as follows. Cell wall formation. Adds enolpyruvyl to UDP-N-acetylglucosamine. The chain is UDP-N-acetylglucosamine 1-carboxyvinyltransferase from Prochlorococcus marinus (strain MIT 9312).